Consider the following 398-residue polypeptide: Phosphoglycerate kinase (398 aa).

Substrate-binding positions include 21–23 (DFN), Arg-36, 59–62 (HFGR), Arg-117, and Arg-150. ATP-binding positions include Lys-200, Glu-321, and 351–354 (GGDS).

It belongs to the phosphoglycerate kinase family. As to quaternary structure, monomer.

Its subcellular location is the cytoplasm. It catalyses the reaction (2R)-3-phosphoglycerate + ATP = (2R)-3-phospho-glyceroyl phosphate + ADP. The protein operates within carbohydrate degradation; glycolysis; pyruvate from D-glyceraldehyde 3-phosphate: step 2/5. The polypeptide is Phosphoglycerate kinase (Wolbachia pipientis wMel).